A 472-amino-acid polypeptide reads, in one-letter code: Uronate isomerase (472 aa).

It belongs to the metallo-dependent hydrolases superfamily. Uronate isomerase family.

The catalysed reaction is D-glucuronate = D-fructuronate. It catalyses the reaction aldehydo-D-galacturonate = keto-D-tagaturonate. The protein operates within carbohydrate metabolism; pentose and glucuronate interconversion. In Xanthomonas oryzae pv. oryzae (strain MAFF 311018), this protein is Uronate isomerase.